The following is a 184-amino-acid chain: Alpha-tubulin N-acetyltransferase (184 aa).

The N-acetyltransferase domain occupies 1-174 (MNIPPEKMHN…NNFVIFAEYF (174 aa)). Acetyl-CoA contacts are provided by residues 108–121 (FYIQRNFRKRGLGL) and 144–153 (SYKLQSFLKK).

It belongs to the acetyltransferase ATAT1 family.

It catalyses the reaction L-lysyl-[alpha-tubulin] + acetyl-CoA = N(6)-acetyl-L-lysyl-[alpha-tubulin] + CoA + H(+). Functionally, specifically acetylates 'Lys-40' in alpha-tubulin on the lumenal side of microtubules. Promotes microtubule destabilization and accelerates microtubule dynamics; this activity may be independent of acetylation activity. Acetylates alpha-tubulin with a slow enzymatic rate, due to a catalytic site that is not optimized for acetyl transfer. Enters the microtubule through each end and diffuses quickly throughout the lumen of microtubules. Acetylates only long/old microtubules because of its slow acetylation rate since it does not have time to act on dynamically unstable microtubules before the enzyme is released. This chain is Alpha-tubulin N-acetyltransferase, found in Plasmodium knowlesi (strain H).